The sequence spans 281 residues: Foldase protein PrsA (281 aa).

The first 18 residues, 1-18 (MKKWMMAAAVVSLMALSA), serve as a signal peptide directing secretion. Residue Cys-19 is the site of N-palmitoyl cysteine attachment. Residue Cys-19 is the site of S-diacylglycerol cysteine attachment. Residues 133 to 223 (KPKIRASHIL…YGYHIIKVTD (91 aa)) enclose the PpiC domain.

The protein belongs to the PrsA family.

Its subcellular location is the cell membrane. The catalysed reaction is [protein]-peptidylproline (omega=180) = [protein]-peptidylproline (omega=0). Functionally, plays a major role in protein secretion by helping the post-translocational extracellular folding of several secreted proteins. This chain is Foldase protein PrsA, found in Geobacillus kaustophilus (strain HTA426).